Reading from the N-terminus, the 381-residue chain is Tumor necrosis factor receptor superfamily member 10B (381 aa).

A signal peptide spans 1 to 52 (MEPPGPSTPTASAAARADHYTPGLRPLPKRRLLYSFALLLAVLQAVFVPVTA). TNFR-Cys repeat units follow at residues 26 to 86 (PLPK…GNCK), 87 to 129 (PCRE…NTVC), and 130 to 169 (RCKPGTFEDKDSPEICQSCSNCTDGEEELTSCTPRENRKC). Over 53 to 180 (NPAHNRPAGL…SKTAWASWHK (128 aa)) the chain is Extracellular. Intrachain disulfides connect cysteine 74–cysteine 85, cysteine 88–cysteine 105, cysteine 108–cysteine 121, cysteine 111–cysteine 129, cysteine 131–cysteine 145, cysteine 148–cysteine 161, and cysteine 151–cysteine 169. A helical transmembrane segment spans residues 181 to 201 (LGLWIGLLVPVVLLIGALLVW). Topologically, residues 202 to 381 (KTGAWRQWLL…ETGPGGSQCV (180 aa)) are cytoplasmic. Positions 228-260 (HSSLLDRQTSSTTNDSNHNTEPGKTQKTGKKLL) are disordered. Residues 236–247 (TSSTTNDSNHNT) are compositionally biased toward low complexity. Residues 273–356 (KFIFEYCSDI…DAMEKIEDYA (84 aa)) form the Death domain. The (Microbial infection) N-beta-linked (GlcNAc) arginine glycan is linked to arginine 293.

As to quaternary structure, monomer. Can interact with TRADD and RIPK1. Three TNFRSF10B molecules interact with the TNFSF10 homotrimer. In the absence of stimulation, interacts with BIRC2, DDX3X and GSK3B. The interaction with BIRC2 and DDX3X is further enhanced upon receptor stimulation and accompanied by DDX3X and BIRC2 cleavage. (Microbial infection) Glycosylated at Arg-293 by S.typhimurium protein Ssek3. In terms of tissue distribution, highly expressed in heart, lung and kidney.

It is found in the membrane. In terms of biological role, receptor for the cytotoxic ligand TNFSF10/TRAIL. The adapter molecule FADD recruits caspase-8 to the activated receptor. The resulting death-inducing signaling complex (DISC) performs caspase-8 proteolytic activation which initiates the subsequent cascade of caspases (aspartate-specific cysteine proteases) mediating apoptosis. Promotes the activation of NF-kappa-B. Essential for ER stress-induced apoptosis. The sequence is that of Tumor necrosis factor receptor superfamily member 10B (Tnfrsf10b) from Mus musculus (Mouse).